A 400-amino-acid polypeptide reads, in one-letter code: 2-[(L-alanin-3-ylcarbamoyl)methyl]-2-hydroxybutanedioate decarboxylase (400 aa).

Lys50 carries the post-translational modification N6-(pyridoxal phosphate)lysine. Pyridoxal 5'-phosphate is bound by residues Gly228 and Glu266 to Arg269. Catalysis depends on Cys344, which acts as the Proton donor. Tyr373 lines the pyridoxal 5'-phosphate pocket.

The protein belongs to the Orn/Lys/Arg decarboxylase class-II family. Homodimer. Pyridoxal 5'-phosphate is required as a cofactor.

It carries out the reaction 2-[(L-alanin-3-ylcarbamoyl)methyl]-2-hydroxybutanedioate + H(+) = 2-[(2-aminoethylcarbamoyl)methyl]-2-hydroxybutanedioate + CO2. It functions in the pathway siderophore biosynthesis. Functionally, catalyzes the decarboxylation of citryl-L-2,3-diaminopropionic acid to citryl-diaminoethane, the second step in staphyloferrin B biosynthesis. This chain is 2-[(L-alanin-3-ylcarbamoyl)methyl]-2-hydroxybutanedioate decarboxylase, found in Staphylococcus aureus (strain NCTC 8325 / PS 47).